The sequence spans 90 residues: Bombyxin B-5 (90 aa).

The signal sequence occupies residues M1–S20. 3 disulfides stabilise this stretch: C30–C75, C42–C88, and C74–C79. The propeptide at G49 to S64 is c peptide like.

This sequence belongs to the insulin family. As to quaternary structure, heterodimer of a B chain and an A chain linked by two disulfide bonds.

Its subcellular location is the secreted. In terms of biological role, brain peptide responsible for activation of prothoracic glands to produce ecdysone in insects. This is Bombyxin B-5 (BBXB5) from Bombyx mori (Silk moth).